Consider the following 251-residue polypeptide: Hydroxyacylglutathione hydrolase (251 aa).

The Zn(2+) site is built by histidine 53, histidine 55, aspartate 57, histidine 58, histidine 110, aspartate 127, and histidine 165.

The protein belongs to the metallo-beta-lactamase superfamily. Glyoxalase II family. Monomer. The cofactor is Zn(2+).

It catalyses the reaction an S-(2-hydroxyacyl)glutathione + H2O = a 2-hydroxy carboxylate + glutathione + H(+). Its pathway is secondary metabolite metabolism; methylglyoxal degradation; (R)-lactate from methylglyoxal: step 2/2. In terms of biological role, thiolesterase that catalyzes the hydrolysis of S-D-lactoyl-glutathione to form glutathione and D-lactic acid. This Salmonella arizonae (strain ATCC BAA-731 / CDC346-86 / RSK2980) protein is Hydroxyacylglutathione hydrolase.